The primary structure comprises 415 residues: DNA polymerase IV (415 aa).

The region spanning 15–196 (ILHVDMNCFF…LSVEAMHGIG (182 aa)) is the UmuC domain. Positions 19 and 115 each coordinate Mg(2+). Residue glutamate 116 is part of the active site. Residues 235–246 (KRAKGTDDREVD) are compositionally biased toward basic and acidic residues. Residues 235 to 260 (KRAKGTDDREVDPSQMGQHKSVGNSM) form a disordered region. A compositionally biased stretch (polar residues) spans 249 to 260 (QMGQHKSVGNSM).

The protein belongs to the DNA polymerase type-Y family. As to quaternary structure, monomer. Mg(2+) serves as cofactor.

It localises to the cytoplasm. The enzyme catalyses DNA(n) + a 2'-deoxyribonucleoside 5'-triphosphate = DNA(n+1) + diphosphate. Its function is as follows. Poorly processive, error-prone DNA polymerase involved in untargeted mutagenesis. Copies undamaged DNA at stalled replication forks, which arise in vivo from mismatched or misaligned primer ends. These misaligned primers can be extended by PolIV. Exhibits no 3'-5' exonuclease (proofreading) activity. May be involved in translesional synthesis, in conjunction with the beta clamp from PolIII. The polypeptide is DNA polymerase IV (Bacillus cereus (strain ATCC 14579 / DSM 31 / CCUG 7414 / JCM 2152 / NBRC 15305 / NCIMB 9373 / NCTC 2599 / NRRL B-3711)).